The sequence spans 349 residues: Phosphorylcholine phosphatase (349 aa).

The signal sequence occupies residues 1–22 (MTFAKGILAALALAAAVGQASA). The Nucleophile role is filled by Asp-53. 2 residues coordinate Mg(2+): Asp-53 and Asp-55. The active-site Proton donor is Asp-55. An intrachain disulfide couples Cys-109 to Cys-116. Asp-284 serves as a coordination point for Mg(2+).

This sequence belongs to the HAD-like hydrolase superfamily. As to quaternary structure, monomer. Homodimer. Homotetramer. The cofactor is Mg(2+).

The protein localises to the periplasm. It carries out the reaction phosphocholine + H2O = choline + phosphate. It catalyses the reaction phosphoethanolamine + H2O = ethanolamine + phosphate. Activity is inhibited by high concentrations of phosphorylcholine, phosphorylethanolamine, choline or betaine. Displays different properties depending on the substrate utilized, the pH conditions as well as the presence or absence of metal ions. At pH 5, activity is inhibited by Al(3+) ions. At pH 7.4, the enzyme cannot catalyze the hydrolysis of pNPP, phosphorylethanolamine is a poor substrate in either the presence or absence of divalent cations, and activity measured with phosphorylcholine is independent of divalent cations or is not inhibited by Al(3+) ions. Mg(2+) produces identical activation at pH 5.0 and 7.4, but Zn(2+) is an activator at pH 5.0 and becomes an inhibitor at pH 7.4. This inhibition at pH 7.4 may be due to a transition from octahedral to tetrahedral coordination geometry, which is produced by hydrolysis of the Zn-hexacoordinated complex. Functionally, catalyzes the hydrolysis of phosphorylcholine (PCho) to produce choline and inorganic phosphate. Can also hydrolyze phosphorylethanolamine and the nonphysiological substrate p-nitrophenylphosphate (pNPP). Shows higher affinity and catalytic efficiency with phosphorylcholine as substrate. In terms of biological role, is probably involved in virulence. The bacteria may break down various host compounds or host cell membranes through the coordinated action of phospholipase C and phosphocholine phosphatase. The final consequence of the action of these enzymes is an increase of the free choline concentration, which may promote the pathogenicity of P.aeruginosa. The sequence is that of Phosphorylcholine phosphatase from Pseudomonas aeruginosa (strain ATCC 15692 / DSM 22644 / CIP 104116 / JCM 14847 / LMG 12228 / 1C / PRS 101 / PAO1).